A 612-amino-acid polypeptide reads, in one-letter code: Cytoplasmic dynein 1 intermediate chain 2 (612 aa).

Basic and acidic residues-rich tracts occupy residues 1–13 (MSDKSELKAELER) and 20–43 (QIREGKKRKEEERKKKETDQKKEA). Disordered regions lie at residues 1–117 (MSDK…MAKI) and 129–188 (TYTK…EEKQ). S2 carries the N-acetylserine modification. S51 carries the diphosphoserine modification. Phosphoserine is present on residues S51 and S84. Positions 82-91 (PSSKSVSTPS) are enriched in low complexity. At T89 the chain carries Phosphothreonine. Residues S91, S95, and S98 each carry the phosphoserine modification. Residues 164–188 (EKTLKKDEESDSKAPPHELTEEEKQ) show a composition bias toward basic and acidic residues. WD repeat units follow at residues 251-300 (SKHR…TTPE), 304-344 (HCQS…RTPV), 353-394 (AHTH…HPQD), 403-443 (SKAV…AGIS), 448-493 (GHQG…PLYS), 496-536 (DNSD…EVPT), and 542-581 (EGNPALNRVRWTHSGREIAVGDSEGQIVIYDVGEQIAVPR).

Belongs to the dynein intermediate chain family. Homodimer. The cytoplasmic dynein 1 complex consists of two catalytic heavy chains (HCs) and a number of non-catalytic subunits presented by intermediate chains (ICs), light intermediate chains (LICs) and light chains (LCs); the composition seems to vary in respect to the IC, LIC and LC composition. The heavy chain homodimer serves as a scaffold for the probable homodimeric assembly of the respective non-catalytic subunits. The ICs and LICs bind directly to the HC dimer and the LCs assemble on the IC dimer. Interacts with DYNLT3. Interacts with DYNLT1. Interacts (dephosphorylated at Ser-84) with DCTN1. Interacts with BICD2. Interacts with SPEF2. Interacts with CFAP61. In terms of processing, the phosphorylation status of Ser-84 appears to be involved in dynactin-dependent target binding. Pyrophosphorylation by 5-diphosphoinositol pentakisphosphate (5-IP7) promotes interaction with DCTN1. Serine pyrophosphorylation is achieved by Mg(2+)-dependent, but enzyme independent transfer of a beta-phosphate from a inositol pyrophosphate to a pre-phosphorylated serine residue.

Its subcellular location is the cytoplasm. It is found in the cytoskeleton. Acts as one of several non-catalytic accessory components of the cytoplasmic dynein 1 complex that are thought to be involved in linking dynein to cargos and to adapter proteins that regulate dynein function. Cytoplasmic dynein 1 acts as a motor for the intracellular retrograde motility of vesicles and organelles along microtubules. The intermediate chains mediate the binding of dynein to dynactin via its 150 kDa component (p150-glued) DCTN1. Involved in membrane-transport, such as Golgi apparatus, late endosomes and lysosomes. The sequence is that of Cytoplasmic dynein 1 intermediate chain 2 (DYNC1I2) from Bos taurus (Bovine).